We begin with the raw amino-acid sequence, 166 residues long: Large ribosomal subunit protein eL21 (166 aa).

Belongs to the eukaryotic ribosomal protein eL21 family. Component of the large ribosomal subunit.

Its subcellular location is the cytoplasm. It localises to the cytosol. It is found in the endoplasmic reticulum. Component of the large ribosomal subunit. The ribosome is a large ribonucleoprotein complex responsible for the synthesis of proteins in the cell. The sequence is that of Large ribosomal subunit protein eL21 (RPL21) from Entamoeba histolytica (strain ATCC 30459 / HM-1:IMSS / ABRM).